Consider the following 459-residue polypeptide: Argininosuccinate lyase (459 aa).

It belongs to the lyase 1 family. Argininosuccinate lyase subfamily.

It is found in the cytoplasm. The catalysed reaction is 2-(N(omega)-L-arginino)succinate = fumarate + L-arginine. It functions in the pathway amino-acid biosynthesis; L-arginine biosynthesis; L-arginine from L-ornithine and carbamoyl phosphate: step 3/3. This is Argininosuccinate lyase from Lactococcus lactis subsp. cremoris (strain MG1363).